The sequence spans 514 residues: Double-stranded RNA-binding protein 6 (514 aa).

2 DRBM domains span residues 1-70 (MYKN…ALAR) and 87-155 (VYKN…SLRQ). Disordered stretches follow at residues 195-268 (NNPH…SRFP) and 455-496 (EASQ…KDDH). 3 stretches are compositionally biased toward polar residues: residues 216 to 225 (FPQSSHSSYS), 249 to 263 (AASQ…SPNP), and 473 to 484 (SPDSLPKTQLKT).

Binds double-stranded RNA. This is Double-stranded RNA-binding protein 6 (DRB6) from Oryza sativa subsp. japonica (Rice).